A 281-amino-acid chain; its full sequence is Protein synthesis inhibitor I (281 aa).

A2 is subject to N-acetylalanine. E175 is an active-site residue.

It belongs to the ribosome-inactivating protein family. Type 1 RIP subfamily.

It is found in the cytoplasm. The catalysed reaction is Endohydrolysis of the N-glycosidic bond at one specific adenosine on the 28S rRNA.. Inhibits the elongation phase of protein synthesis. It inactivates fungal ribosomes even more effectively than mammalian ribosomes and is thought to function as a constitutive antifungal agent in plants. This is Protein synthesis inhibitor I (RIP30) from Hordeum vulgare (Barley).